Consider the following 497-residue polypeptide: Putative glucuronosyltransferase PGSIP8 (497 aa).

The chain crosses the membrane as a helical span at residues 3 to 23 (LQRGFVFLSLVLSFMIIETTA). Mn(2+) is bound by residues Asp-165 and Asp-167. 5 helical membrane passes run 319-339 (YSAEMPLVIIQAMFYLGIIVV), 365-385 (GFKLIALLSVVAAYIFPFFTI), 388-408 (TIHPLIGWSLYLMASFALSSI), 418-438 (LPVLTPWLGILGTLLVMAFPW), and 442-462 (GVVRALSVFAYAFCCAPFVWV).

The protein belongs to the glycosyltransferase 8 family. Glycogenin subfamily. Mn(2+) serves as cofactor.

It is found in the membrane. The polypeptide is Putative glucuronosyltransferase PGSIP8 (PGSIP8) (Arabidopsis thaliana (Mouse-ear cress)).